A 145-amino-acid chain; its full sequence is Maximins 3/H11 type 3 (145 aa).

Positions 1-18 (MNFKYIVAVSFLIASAYA) are cleaved as a signal peptide. 2 consecutive propeptides follow at residues 19–43 (RSVQNDEQSLSQRDVLEEEESLREI) and 75–122 (TAEE…TKKE). Isoleucine amide is present on Ile-144.

The protein belongs to the bombinin family. Expressed by the skin glands.

It is found in the secreted. Its function is as follows. Maximin-3 shows antibacterial activity against both Gram-positive and Gram-negative bacteria. It also shows antimicrobial activity against the fungus C.albicans, but not against A.flavus nor P.uticale. It has little hemolytic activity. It possess a significant cytotoxicity against tumor cell lines. It possess a significant anti-HIV activity. It shows high spermicidal activity. Functionally, maximin-H11 shows antimicrobial activity against bacteria and against the fungus C.albicans. Shows strong hemolytic activity. The sequence is that of Maximins 3/H11 type 3 from Bombina maxima (Giant fire-bellied toad).